A 436-amino-acid polypeptide reads, in one-letter code: Putative permease MJ0326 (436 aa).

Helical transmembrane passes span 24–44 (LAGITTFMTMAYIIFVNPQIL), 51–71 (FGAVMVATCIASAIATLVMGL), 79–99 (LAPGMGLNAYFTYGVCLGMGI), 103–123 (VALGAVFISGVLFIILTLTKI), 139–159 (TAVGIGLFIAFIGLKSAGIIV), 171–191 (LMEPSTLLALFGIFLTSILVS), 194–214 (VIGAILIGIIVTSLIGMILGI), 235–255 (LDIMGALNLGLLTIVLAFFFV), 322–342 (GFVSVVVAMLFLLSLFFYPVV), 345–365 (IPPYATAAALVIVGALMMRSV), 381–401 (ITLLTIPLTFSIATGLALGFI), and 416–436 (VHWLVYVLAVIFALRFVYLSG).

Belongs to the nucleobase:cation symporter-2 (NCS2) (TC 2.A.40) family. Azg-like subfamily.

The protein localises to the cell membrane. The sequence is that of Putative permease MJ0326 from Methanocaldococcus jannaschii (strain ATCC 43067 / DSM 2661 / JAL-1 / JCM 10045 / NBRC 100440) (Methanococcus jannaschii).